Consider the following 445-residue polypeptide: Sterile alpha motif domain-containing protein 7 (445 aa).

The interval 98–172 (HAARAEMEMY…HLQGNPILLA (75 aa)) is required for localization to nuclear polycomb bodies. Residues 193–282 (YQKPPESDTE…WDDGKGKPSE (90 aa)) form a disordered region. Positions 227 to 244 (IKDPDIEVDNQQKPRVAD) are enriched in basic and acidic residues. The SAM domain occupies 324-378 (WTVDDVYNFIRSLPGCSDYAQVFKDHAIDGETLPLLTEQHLRGTMGLKLGPALKI). The segment at 425-445 (SIPGPQDLLSPKRTEQDVMRN) is disordered. The span at 434–445 (SPKRTEQDVMRN) shows a compositional bias: basic and acidic residues.

In terms of assembly, monomer, homodimer and homooligomer. Component of a Polycomb group (PcG) multiprotein PRC1-like complex. Interacts with PHC2 and NR2E3. Interacts with RNF1 in a PHC2-dependent manner. Interacts with SAMD11. Expressed in the retina and the pineal gland. In the retina, it is predominantly expressed in the outer nuclear layer and developing rod photoreceptors.

The protein localises to the nucleus. The protein resides in the cytoplasm. In terms of biological role, component of a Polycomb group (PcG) multiprotein PRC1-like complex, essential for establishing rod photoreceptor cell identity and function by silencing nonrod gene expression in developing rod photoreceptor cells. Via its association with the PRC1-like complex, promotes epigenetic repressive marks H3K27me3 and H2AK119ub marks in nonrod genes, silencing their transcription. Represses Crx-controlled photoreceptor-specific gene expression. This is Sterile alpha motif domain-containing protein 7 (Samd7) from Mus musculus (Mouse).